The chain runs to 406 residues: MFRVSLQATRRVAFRSARQIRFYSAHPPSGGVSHMNKPALLLAGFSTLGAIYVADGCPTLIERKPAPAEKPAEETPAAGQSQSISEPTKDADESPVSAQEEGAEPVTTPENEITYSEETHQALAATLSGDEPAAIEPVAESVNEQATEPAASGEATNEPVTGISEDTKAPSLSFDDSKTAKGVVLEDEADKKEIQQTSPDAVKTASKDGSEGESDVVLHEKSPAEAETITEAEEQAEIRSISGGTAEQSATAAAAAAGVQGEKKNEQQTAYNPETGEINWDCPCLGGMAYGPCGEEFKSAFSCFVYSEADPKGINCVEKFSTMQNCFRKYPDYYAEQIKDEEEASAEASKIEDKSTTPVSTATSTVEVQTENAVFEPVLEKYVEENPQLKDTPEAAAVTNTDDEKK.

The N-terminal 23 residues, 1 to 23 (MFRVSLQATRRVAFRSARQIRFY), are a transit peptide targeting the mitochondrion. Over 24 to 37 (SAHPPSGGVSHMNK) the chain is Mitochondrial matrix. Residues 38–54 (PALLLAGFSTLGAIYVA) form a helical; Signal-anchor for type II membrane protein membrane-spanning segment. At 55-406 (DGCPTLIERK…AVTNTDDEKK (352 aa)) the chain is on the mitochondrial intermembrane side. Disordered stretches follow at residues 67–110 (PAEK…TTPE) and 142–276 (VNEQ…PETG). The span at 205–224 (ASKDGSEGESDVVLHEKSPA) shows a compositional bias: basic and acidic residues. Residues 242–260 (SGGTAEQSATAAAAAAGVQ) show a composition bias toward low complexity. 3 disulfide bridges follow: cysteine 282/cysteine 284, cysteine 293/cysteine 326, and cysteine 303/cysteine 316. In terms of domain architecture, CHCH spans 290–334 (YGPCGEEFKSAFSCFVYSEADPKGINCVEKFSTMQNCFRKYPDYY). 2 short sequence motifs (cx9C motif) span residues 293-303 (CGEEFKSAFSC) and 316-326 (CVEKFSTMQNC). Disordered stretches follow at residues 341–365 (EEEA…ATST) and 384–406 (EENP…DEKK). Residues 356-365 (TTPVSTATST) are compositionally biased toward low complexity. A compositionally biased stretch (basic and acidic residues) spans 384 to 393 (EENPQLKDTP).

Monomer. It depends on Cu(2+) as a cofactor. Requires Zn(2+) as cofactor.

It is found in the mitochondrion inner membrane. Functionally, required for the import and folding of small cysteine-containing proteins (small Tim) in the mitochondrial intermembrane space (IMS). Forms a redox cycle with ERV1 that involves a disulfide relay system. Precursor proteins to be imported into the IMS are translocated in their reduced form into the mitochondria. The oxidized form of MIA40 forms a transient intermolecular disulfide bridge with the reduced precursor protein, resulting in oxidation of the precursor protein that now contains an intramolecular disulfide bond and is able to undergo folding in the IMS. In Kluyveromyces lactis (strain ATCC 8585 / CBS 2359 / DSM 70799 / NBRC 1267 / NRRL Y-1140 / WM37) (Yeast), this protein is Mitochondrial intermembrane space import and assembly protein 40 (MIA40).